We begin with the raw amino-acid sequence, 200 residues long: NAD(P)H dehydrogenase (quinone) (200 aa).

Residues 4 to 191 enclose the Flavodoxin-like domain; that stretch reads VLVLYYSSYG…DIARYQGKHV (188 aa). FMN contacts are provided by residues 10-15 and 79-81; these read SSYGHV and TRF. Tyrosine 12 contacts NAD(+). Residue tryptophan 99 participates in substrate binding. FMN contacts are provided by residues 114–120 and histidine 135; that span reads STGTQHG.

The protein belongs to the WrbA family. The cofactor is FMN.

It catalyses the reaction a quinone + NADH + H(+) = a quinol + NAD(+). It carries out the reaction a quinone + NADPH + H(+) = a quinol + NADP(+). The sequence is that of NAD(P)H dehydrogenase (quinone) from Burkholderia multivorans (strain ATCC 17616 / 249).